Here is a 335-residue protein sequence, read N- to C-terminus: tRNA methyltransferase 10 homolog A (335 aa).

Disordered regions lie at residues 1 to 91 (MSSE…DRKR) and 279 to 335 (VPAH…PDPQ). S22 and S24 each carry phosphoserine. Basic and acidic residues predominate over residues 52-62 (RLWEEQREQRK). The stretch at 52 to 84 (RLWEEQREQRKEKRKEKRKRKKLERRCQLESNS) forms a coiled coil. The segment covering 63 to 75 (EKRKEKRKRKKLE) has biased composition (basic residues). An SAM-dependent MTase TRM10-type domain is found at 88-279 (DRKRIRRHVA…TILPPRKGAV (192 aa)). Positions 304 to 319 (EGEHGRDDPGSPHKEQ) are enriched in basic and acidic residues. Residues 320–335 (QGQQSSSVSAVSPDPQ) show a composition bias toward low complexity. Position 331 is a phosphoserine (S331).

It belongs to the class IV-like SAM-binding methyltransferase superfamily. TRM10 family. In terms of assembly, interacts with tRNA. Ubiquitously expressed. Is more abundant in brain and pancreatic islets compared to other tissues (at protein level).

The protein localises to the nucleus. Its subcellular location is the nucleolus. It catalyses the reaction guanosine(9) in tRNA + S-adenosyl-L-methionine = N(1)-methylguanosine(9) in tRNA + S-adenosyl-L-homocysteine + H(+). Its function is as follows. S-adenosyl-L-methionine-dependent guanine N(1)-methyltransferase that catalyzes the formation of N(1)-methylguanine at position 9 (m1G9) in tRNAs. Probably not able to catalyze formation of N(1)-methyladenine at position 9 (m1A9) in tRNAs. This is tRNA methyltransferase 10 homolog A (Trmt10a) from Rattus norvegicus (Rat).